The sequence spans 290 residues: Metallo-beta-lactamase L1 type 3 (290 aa).

The signal sequence occupies residues 1–21 (MRSTLLAFALAVALPAAHTSA). Residues 22–33 (AEVPLPQLRAYT) constitute a propeptide that is removed on maturation. Zn(2+)-binding residues include histidine 105, histidine 107, aspartate 109, histidine 110, and histidine 181. Aspartate 205 contacts substrate. Residues cysteine 239 and cysteine 267 are joined by a disulfide bond. Zn(2+) is bound at residue histidine 246.

This sequence belongs to the metallo-beta-lactamase superfamily. Class-B beta-lactamase family. Homotetramer. Zn(2+) is required as a cofactor.

The protein localises to the periplasm. It catalyses the reaction a beta-lactam + H2O = a substituted beta-amino acid. Inhibited by Hg(2+) or Cu(2+), and by chelating agents such as EDTA and O-phenanthroline. Reduced enzymatic activity in presence of cobalt, nickel, cadmium, and manganese. Functionally, confers resistance to the different beta-lactams antibiotics (penicillin, cephalosporin and carbapenem) via the hydrolysis of the beta-lactam ring. In Stenotrophomonas maltophilia (Pseudomonas maltophilia), this protein is Metallo-beta-lactamase L1 type 3.